Reading from the N-terminus, the 299-residue chain is tRNA dimethylallyltransferase (299 aa).

Residue 11-18 participates in ATP binding; the sequence is GPTAVGKT. Substrate is bound at residue 13-18; it reads TAVGKT. The interval 36-39 is interaction with substrate tRNA; it reads DSQQ.

The protein belongs to the IPP transferase family. As to quaternary structure, monomer. Requires Mg(2+) as cofactor.

The catalysed reaction is adenosine(37) in tRNA + dimethylallyl diphosphate = N(6)-dimethylallyladenosine(37) in tRNA + diphosphate. Functionally, catalyzes the transfer of a dimethylallyl group onto the adenine at position 37 in tRNAs that read codons beginning with uridine, leading to the formation of N6-(dimethylallyl)adenosine (i(6)A). This Streptococcus pyogenes serotype M49 (strain NZ131) protein is tRNA dimethylallyltransferase.